A 241-amino-acid chain; its full sequence is Ubiquinone biosynthesis O-methyltransferase (241 aa).

Residues Arg46, Gly66, Asp87, and Met131 each coordinate S-adenosyl-L-methionine.

This sequence belongs to the methyltransferase superfamily. UbiG/COQ3 family.

It carries out the reaction a 3-demethylubiquinol + S-adenosyl-L-methionine = a ubiquinol + S-adenosyl-L-homocysteine + H(+). The catalysed reaction is a 3-(all-trans-polyprenyl)benzene-1,2-diol + S-adenosyl-L-methionine = a 2-methoxy-6-(all-trans-polyprenyl)phenol + S-adenosyl-L-homocysteine + H(+). It functions in the pathway cofactor biosynthesis; ubiquinone biosynthesis. In terms of biological role, O-methyltransferase that catalyzes the 2 O-methylation steps in the ubiquinone biosynthetic pathway. This chain is Ubiquinone biosynthesis O-methyltransferase, found in Bordetella parapertussis (strain 12822 / ATCC BAA-587 / NCTC 13253).